The chain runs to 538 residues: Nicotinate phosphoribosyltransferase (538 aa).

Tyr-21 and Thr-210 together coordinate nicotinate. His-213 carries the phosphohistidine modification. Arg-318 is a nicotinate binding site. Residue Thr-380 coordinates 5-phospho-alpha-D-ribose 1-diphosphate.

It belongs to the NAPRTase family. As to quaternary structure, homodimer. Requires Mg(2+) as cofactor. The cofactor is Mn(2+). Post-translationally, transiently phosphorylated on a His residue during the reaction cycle. Phosphorylation strongly increases the affinity for substrates and increases the rate of nicotinate D-ribonucleotide production. Dephosphorylation regenerates the low-affinity form of the enzyme, leading to product release.

It localises to the cytoplasm. Its subcellular location is the cytosol. It catalyses the reaction nicotinate + 5-phospho-alpha-D-ribose 1-diphosphate + ATP + H2O = nicotinate beta-D-ribonucleotide + ADP + phosphate + diphosphate. Its pathway is cofactor biosynthesis; NAD(+) biosynthesis; nicotinate D-ribonucleotide from nicotinate: step 1/1. In terms of biological role, catalyzes the first step in the biosynthesis of NAD from nicotinic acid, the ATP-dependent synthesis of beta-nicotinate D-ribonucleotide from nicotinate and 5-phospho-D-ribose 1-phosphate. Helps prevent cellular oxidative stress via its role in NAD biosynthesis. This chain is Nicotinate phosphoribosyltransferase (NAPRT), found in Bos taurus (Bovine).